We begin with the raw amino-acid sequence, 973 residues long: MSELKTISIRGAREHNLKGIDLDLPRNKLIVMTGLSGSGKSSLAFDTIYAEGQRRYVESLSAYARQFLEMMQKPDVDQIDGLSPAISIEQKTTSRNPRSTVGTVTEIYDYLRLLFARVGVPYSPATGLPIESQTVSQMVDRVLEFGEGTRLYMLAPLVRGRKGEYRKELAELMKKGFQRVKVDGQFYEIADVPALDKKYKHDIDVVVDRVVVRPDIGTRLADSIETCLTLADGLAIAEFADRPLPPEETSAGGSANKSLNETHERVLFSEKFACPVSGFTIPEIEPRLFSFNNPFGACTTCDGLGSQQKIDEALIVPEPNRTLRDGAIAPWAKSTSPYYNQTLEALGTVFGFKLGSRWSELSEEAQEAILHGTKDKITFHYQDGARSYNTTKTFEGIVPNLERRWKETDSAWAREEIERYMSAAPCPACAGYRLKPEALAVKIHALHIGEVSEMSIRAARDWFEVLPEHLSTKQNEIAVRILKEIRERLRFLNDVGLEYLSLSRNSGTLSGGESQRIRLASQIGSGLTGVLYVLDEPSIGLHQRDNARLLDTLRHLRDIGNTVIVVEHDEDAILTADYVVDIGPAAGIHGGEVIAEGTPSDIMSNPKSLTGKYLSGELSVAVPGERRKPKKKKEVTVVGARANNLKNVTASIPLGVFTAVTGVSGGGKSTFLIETLYKAAARRVMGARENPAEHDRIDGFEHIDKVIDIDQSPIGRTPRSNPATYTGAFTPIRDWFAGLPEAKARGYQPGRFSFNVKGGRCEACQGDGVIKIEMHFLPDVYVTCDVCHGKRYNRETLDVHFKGKSIADVLDMTVEEGVEFFAAVPAVRDKLVTLNQVGLGYIKIGQQANTLSGGEAQRVKLAKELSKRSTGRTLYILDEPTTGLHFHDVAKLLEVLHELVNQGNSVVVIEHNLEVIKTADWIIDFGPEGGDGGGEVIAQGTPEEVVKEPRSYTGQFLKELLERRPVKKVVAAE.

ATP is bound at residue 34–41 (GLSGSGKS). ABC transporter domains lie at 331-609 (WAKS…PKSL) and 629-958 (PKKK…QFLK). 662-669 (GVSGGGKS) is an ATP binding site. The C4-type zinc finger occupies 761–787 (CEACQGDGVIKIEMHFLPDVYVTCDVC).

Belongs to the ABC transporter superfamily. UvrA family. As to quaternary structure, forms a heterotetramer with UvrB during the search for lesions.

The protein resides in the cytoplasm. Its function is as follows. The UvrABC repair system catalyzes the recognition and processing of DNA lesions. UvrA is an ATPase and a DNA-binding protein. A damage recognition complex composed of 2 UvrA and 2 UvrB subunits scans DNA for abnormalities. When the presence of a lesion has been verified by UvrB, the UvrA molecules dissociate. This Rhizobium meliloti (strain 1021) (Ensifer meliloti) protein is UvrABC system protein A.